Here is a 396-residue protein sequence, read N- to C-terminus: Adenylyltransferase and sulfurtransferase UBA4 (396 aa).

ATP-binding positions include Gly51, Asp72, 79 to 83 (SNLHR), Lys95, and 139 to 140 (DG). Zn(2+) is bound by residues Cys180 and Cys183. The active-site Glycyl thioester intermediate; for adenylyltransferase activity is the Cys197. Positions 257 and 260 each coordinate Zn(2+). Residues 305 to 394 (VSTKHILLDV…WAKNVDEKFP (90 aa)) enclose the Rhodanese domain. The Cysteine persulfide intermediate; for sulfurtransferase activity role is filled by Cys355.

This sequence in the N-terminal section; belongs to the HesA/MoeB/ThiF family. UBA4 subfamily. The cofactor is Zn(2+).

The protein localises to the cytoplasm. Its subcellular location is the cytosol. It participates in tRNA modification; 5-methoxycarbonylmethyl-2-thiouridine-tRNA biosynthesis. Its function is as follows. Plays a central role in 2-thiolation of mcm(5)S(2)U at tRNA wobble positions of cytosolic tRNA(Lys), tRNA(Glu) and tRNA(Gln). Acts by mediating the C-terminal thiocarboxylation of sulfur carrier URM1. Its N-terminus first activates URM1 as acyl-adenylate (-COAMP), then the persulfide sulfur on the catalytic cysteine is transferred to URM1 to form thiocarboxylation (-COSH) of its C-terminus. The reaction probably involves hydrogen sulfide that is generated from the persulfide intermediate and that acts as a nucleophile towards URM1. Subsequently, a transient disulfide bond is formed. Does not use thiosulfate as sulfur donor; NFS1 probably acting as a sulfur donor for thiocarboxylation reactions. Prior mcm(5) tRNA modification by the elongator complex is required for 2-thiolation. May also be involved in protein urmylation. This Yarrowia lipolytica (strain CLIB 122 / E 150) (Yeast) protein is Adenylyltransferase and sulfurtransferase UBA4.